We begin with the raw amino-acid sequence, 182 residues long: MSESTTTIETAWLAIGQIVAPQGLRGEMRVNPSSDFPERFLIPGPRWLRRPRQTEPEVVELERGRAIAGKNLYIVQLAGITSREQAEALRGCELLVPASDRPELDEGEFHVLDLIDLSVIDQASSTPLGIVRDVVSAGNDLLVVELTDGREVYIPFVEAIVPVVDLAQGRIEITPPPGLLEL.

The 74-residue stretch at 106–179 folds into the PRC barrel domain; the sequence is EGEFHVLDLI…RIEITPPPGL (74 aa).

Belongs to the RimM family. In terms of assembly, binds ribosomal protein uS19.

It is found in the cytoplasm. Functionally, an accessory protein needed during the final step in the assembly of 30S ribosomal subunit, possibly for assembly of the head region. Essential for efficient processing of 16S rRNA. May be needed both before and after RbfA during the maturation of 16S rRNA. It has affinity for free ribosomal 30S subunits but not for 70S ribosomes. In Synechococcus elongatus (strain ATCC 33912 / PCC 7942 / FACHB-805) (Anacystis nidulans R2), this protein is Ribosome maturation factor RimM.